Here is a 324-residue protein sequence, read N- to C-terminus: Ig gamma-1 chain C region secreted form (324 aa).

The interval 1 to 97 (AKTTPPSVYP…ASSTKVDKKI (97 aa)) is CH1. Cysteines 27 and 82 form a disulfide. The tract at residues 98 to 110 (VPRDCGCKPCICT) is hinge. Residues 111 to 217 (VPEVSSVFIF…PIEKTISKTK (107 aa)) are CH2. 2 disulfide bridges follow: C138–C198 and C244–C302. The N-linked (GlcNAc...) asparagine glycan is linked to N174. The interval 218–324 (GRPKAPQVYT…EKSLSHSPGK (107 aa)) is CH3.

The protein resides in the secreted. This chain is Ig gamma-1 chain C region secreted form (Ighg1), found in Mus musculus (Mouse).